The chain runs to 269 residues: tRNA pseudouridine synthase A (269 aa).

The active-site Nucleophile is the aspartate 51. Tyrosine 109 contacts substrate.

This sequence belongs to the tRNA pseudouridine synthase TruA family. In terms of assembly, homodimer.

It catalyses the reaction uridine(38/39/40) in tRNA = pseudouridine(38/39/40) in tRNA. Functionally, formation of pseudouridine at positions 38, 39 and 40 in the anticodon stem and loop of transfer RNAs. The protein is tRNA pseudouridine synthase A of Histophilus somni (strain 129Pt) (Haemophilus somnus).